Here is a 144-residue protein sequence, read N- to C-terminus: Large ribosomal subunit protein uL11 (144 aa).

Belongs to the universal ribosomal protein uL11 family. Part of the ribosomal stalk of the 50S ribosomal subunit. Interacts with L10 and the large rRNA to form the base of the stalk. L10 forms an elongated spine to which L12 dimers bind in a sequential fashion forming a multimeric L10(L12)X complex. One or more lysine residues are methylated.

Its function is as follows. Forms part of the ribosomal stalk which helps the ribosome interact with GTP-bound translation factors. The polypeptide is Large ribosomal subunit protein uL11 (Streptomyces coelicolor (strain ATCC BAA-471 / A3(2) / M145)).